A 128-amino-acid chain; its full sequence is Large ribosomal subunit protein bL12 (128 aa).

Belongs to the bacterial ribosomal protein bL12 family. Homodimer. Part of the ribosomal stalk of the 50S ribosomal subunit. Forms a multimeric L10(L12)X complex, where L10 forms an elongated spine to which 2 to 4 L12 dimers bind in a sequential fashion. Binds GTP-bound translation factors.

Its function is as follows. Forms part of the ribosomal stalk which helps the ribosome interact with GTP-bound translation factors. Is thus essential for accurate translation. This Aquifex aeolicus (strain VF5) protein is Large ribosomal subunit protein bL12.